The primary structure comprises 161 residues: SUZ RNA-binding domain-containing (161 aa).

Over residues 1–17 (MDDEEVAESWEEAADSG) the composition is skewed to acidic residues. The segment at 1–161 (MDDEEVAESW…GTQGFHHQRR (161 aa)) is disordered. The segment covering 18 to 35 (EMERRLEEKLRISQKERL) has biased composition (basic and acidic residues). The 70-residue stretch at 42–111 (RSPMRTAIVI…ARKRILGSAT (70 aa)) folds into the SUZ domain. A compositionally biased stretch (polar residues) spans 70-91 (PSSNGSLGSSALQTRPSPQVKS). Composition is skewed to basic and acidic residues over residues 93-104 (AQREAEYAEARK) and 116-126 (PQERPNSDRSP). Residues 116–160 (PQERPNSDRSPRGSSHTLSEENRPGNHVVRQPAGPDGTQGFHHQR) enclose the SUZ-C domain. Position 125 is a phosphoserine (S125).

This sequence belongs to the SZRD1 family.

The sequence is that of SUZ RNA-binding domain-containing (szrd1) from Danio rerio (Zebrafish).